A 493-amino-acid chain; its full sequence is Alcohol-forming fatty acyl-CoA reductase (493 aa).

The protein belongs to the fatty acyl-CoA reductase family.

It carries out the reaction a long-chain fatty acyl-CoA + 2 NADPH + 2 H(+) = a long-chain primary fatty alcohol + 2 NADP(+) + CoA. NADPH-dependent alcohol-forming fatty acyl-coenzyme A reductase that catalyzes the reduction of fatty acyl-CoA to fatty alcohols. The recombinant enzyme accepts saturated and mono-unsaturated fatty acyl-CoAs of 16 to 22 carbons. The protein is Alcohol-forming fatty acyl-CoA reductase of Simmondsia chinensis (Jojoba).